A 62-amino-acid polypeptide reads, in one-letter code: Toxin Tb2-II (62 aa).

In terms of domain architecture, LCN-type CS-alpha/beta spans 1-62 (KEGYAMDHEG…KVWDYATNKC (62 aa)). 4 disulfide bridges follow: Cys-11–Cys-62, Cys-15–Cys-38, Cys-23–Cys-43, and Cys-27–Cys-45.

This sequence belongs to the long (4 C-C) scorpion toxin superfamily. Sodium channel inhibitor family. Beta subfamily. As to expression, expressed by the venom gland.

It localises to the secreted. Beta toxins bind voltage-independently at site-4 of sodium channels (Nav) and shift the voltage of activation toward more negative potentials thereby affecting sodium channel activation and promoting spontaneous and repetitive firing. This toxin is active against both mammals and insects. This is Toxin Tb2-II from Tityus bahiensis (Brazilian scorpion).